Here is a 412-residue protein sequence, read N- to C-terminus: 3,4-dihydroxybenzoate--[aryl-carrier protein] ligase (412 aa).

It belongs to the ATP-dependent AMP-binding enzyme family.

The catalysed reaction is holo-[aryl-carrier protein] + 3,4-dihydroxybenzoate + ATP = 3,4-dihydroxybenzoyl-[aryl-carrier protein] + AMP + diphosphate. It catalyses the reaction 3,4-dihydroxybenzoate + ATP + H(+) = 3,4-dihydroxybenzoyl-5'-AMP + diphosphate. It carries out the reaction 3,4-dihydroxybenzoyl-5'-AMP + holo-[aryl-carrier protein] = 3,4-dihydroxybenzoyl-[aryl-carrier protein] + AMP + H(+). The protein operates within siderophore biosynthesis; petrobactin biosynthesis. Its activity is regulated as follows. ATP-pyrophosphate exchange is inhibited in vitro by nonhydrolyzable acylsulfamate analogs that mimic the AsbC-bound intermediate 3,4-dihydroxybenzoyl-AMP. Functionally, involved in the biosynthesis of petrobactin, a catecholate siderophore that functions in both iron acquisition and virulence. Catalyzes the adenylation of 3,4-dihydroxybenzoate (3,4-DHBA) to the corresponding AMP ester, followed by the transfer of the activated unit to the phosphopantetheine thiol of the aryl-carrier protein AsbD. This is 3,4-dihydroxybenzoate--[aryl-carrier protein] ligase from Bacillus anthracis.